The chain runs to 443 residues: UDP-N-acetylmuramate--L-alanine ligase (443 aa).

110–116 (GAHGKTS) contacts ATP.

The protein belongs to the MurCDEF family.

It localises to the cytoplasm. The catalysed reaction is UDP-N-acetyl-alpha-D-muramate + L-alanine + ATP = UDP-N-acetyl-alpha-D-muramoyl-L-alanine + ADP + phosphate + H(+). It functions in the pathway cell wall biogenesis; peptidoglycan biosynthesis. Cell wall formation. The polypeptide is UDP-N-acetylmuramate--L-alanine ligase (Streptococcus agalactiae serotype Ia (strain ATCC 27591 / A909 / CDC SS700)).